The sequence spans 140 residues: Holo-[acyl-carrier-protein] synthase (140 aa).

Mg(2+) is bound by residues Asp9 and Glu63.

It belongs to the P-Pant transferase superfamily. AcpS family. Requires Mg(2+) as cofactor.

The protein resides in the cytoplasm. It carries out the reaction apo-[ACP] + CoA = holo-[ACP] + adenosine 3',5'-bisphosphate + H(+). In terms of biological role, transfers the 4'-phosphopantetheine moiety from coenzyme A to a Ser of acyl-carrier-protein. This is Holo-[acyl-carrier-protein] synthase from Paraburkholderia phytofirmans (strain DSM 17436 / LMG 22146 / PsJN) (Burkholderia phytofirmans).